Consider the following 324-residue polypeptide: Ig gamma-1 chain C region secreted form (324 aa).

A CH1 region spans residues 1 to 97 (AKTTPPSVYP…ASSTKVDKKI (97 aa)). Cysteine 27 and cysteine 82 are oxidised to a cystine. The segment at 98-110 (VPRDCGCKPCICT) is hinge. Residues 111-217 (VPEVSSVFIF…PIEKTISKTK (107 aa)) are CH2. Cystine bridges form between cysteine 138–cysteine 198 and cysteine 244–cysteine 302. The N-linked (GlcNAc...) asparagine glycan is linked to asparagine 174. Residues 218-324 (GRPKAPQVYT…EKSLSHSPGK (107 aa)) are CH3.

Its subcellular location is the secreted. This Mus musculus (Mouse) protein is Ig gamma-1 chain C region secreted form (Ighg1).